The primary structure comprises 316 residues: tRNA dimethylallyltransferase (316 aa).

An ATP-binding site is contributed by 14-21 (GPTAVGKT). Position 16–21 (16–21 (TAVGKT)) interacts with substrate. The tract at residues 39–42 (DSMQ) is interaction with substrate tRNA.

The protein belongs to the IPP transferase family. In terms of assembly, monomer. Requires Mg(2+) as cofactor.

It carries out the reaction adenosine(37) in tRNA + dimethylallyl diphosphate = N(6)-dimethylallyladenosine(37) in tRNA + diphosphate. Its function is as follows. Catalyzes the transfer of a dimethylallyl group onto the adenine at position 37 in tRNAs that read codons beginning with uridine, leading to the formation of N6-(dimethylallyl)adenosine (i(6)A). The polypeptide is tRNA dimethylallyltransferase (Bacillus cytotoxicus (strain DSM 22905 / CIP 110041 / 391-98 / NVH 391-98)).